The chain runs to 425 residues: Formyl-CoA:oxalate CoA-transferase (425 aa).

CoA-binding positions include 17–18 (QS), R38, 72–75 (LDTK), 96–98 (NFG), R104, and 136–139 (KVYE). Residue D168 is the Nucleophile of the active site. 247–249 (GGQ) lines the substrate pocket.

This sequence belongs to the CoA-transferase III family. Frc subfamily. In terms of assembly, homodimer.

It catalyses the reaction formyl-CoA + oxalate = oxalyl-CoA + formate. It participates in metabolic intermediate degradation; oxalate degradation; CO(2) and formate from oxalate: step 1/2. Its function is as follows. Involved in the catabolism of oxalate and in the adapatation to low pH via the induction of the oxalate-dependent acid tolerance response (ATR). Catalyzes the transfer of the CoA moiety from formyl-CoA to oxalate. This Rhodopseudomonas palustris (strain BisA53) protein is Formyl-CoA:oxalate CoA-transferase.